The following is a 351-amino-acid chain: MTPTNQSSGTTNASVEVLSEDGPMPINVMMQEGVKALTKILSNQLQDRQAFQNAPHAMQFVIRNGGKALSNARLEELKDALPKMDSLSLEDELAKIDGQSAYHIDSAEEKETFESKIGQIASRNSADFIIEEDLQNILDDDLKDSELNLDGEEAEIIFDYESQELDTPDGIGEKISQMIESVLPGGFGSEEQGGLRTVTNVEDLDVAEEVTDIDHDTVDAARLHGDGQHSISSRKHSRSKNSKKNGHVRRHDFYDESRDHKSCCPHHHYENLSKLRNYYYHDFEYISRTENRVPDFSVLVNESSPMCLFCEYYMVFGEPPRNMIKWYNRTFGYNRMPNPPRDEQDSRKRNR.

The span at 1–14 (MTPTNQSSGTTNAS) shows a compositional bias: polar residues. Residues 1–20 (MTPTNQSSGTTNASVEVLSE) form a disordered region. A phosphoserine mark is found at Ser100 and Ser106. Thr211 carries the phosphothreonine modification. The segment at 223-249 (LHGDGQHSISSRKHSRSKNSKKNGHVR) is disordered. The segment covering 232 to 249 (SSRKHSRSKNSKKNGHVR) has biased composition (basic residues).

The protein belongs to the IBD2 family. In terms of assembly, interacts with BFA1.

It localises to the cytoplasm. Its subcellular location is the cytoskeleton. It is found in the spindle pole. Part of a checkpoint which monitors spindle integrity and prevents premature exit from mitosis. This cell-cycle arrest depends upon inhibition of the G-protein TEM1 by the BFA1/BUB2 complex. This chain is Protein IBD2 (IBD2), found in Saccharomyces cerevisiae (strain ATCC 204508 / S288c) (Baker's yeast).